Reading from the N-terminus, the 453-residue chain is tRNA modification GTPase MnmE (453 aa).

Residues Arg22, Glu79, and Lys119 each contribute to the (6S)-5-formyl-5,6,7,8-tetrahydrofolate site. A TrmE-type G domain is found at 215 to 376 (GMKVVIAGRP…LKLHLKSLMG (162 aa)). Asn225 is a K(+) binding site. GTP-binding positions include 225–230 (NAGKSS), 244–250 (TEIAGTT), 269–272 (DTAG), and 334–337 (NKAD). Ser229 contacts Mg(2+). K(+)-binding residues include Thr244, Ile246, and Thr249. Thr250 is a Mg(2+) binding site. (6S)-5-formyl-5,6,7,8-tetrahydrofolate is bound at residue Lys453.

Belongs to the TRAFAC class TrmE-Era-EngA-EngB-Septin-like GTPase superfamily. TrmE GTPase family. Homodimer. Heterotetramer of two MnmE and two MnmG subunits. K(+) serves as cofactor.

Its subcellular location is the cytoplasm. Functionally, exhibits a very high intrinsic GTPase hydrolysis rate. Involved in the addition of a carboxymethylaminomethyl (cmnm) group at the wobble position (U34) of certain tRNAs, forming tRNA-cmnm(5)s(2)U34. This Shewanella sp. (strain W3-18-1) protein is tRNA modification GTPase MnmE.